The sequence spans 334 residues: uncharacterized protein (334 aa).

WD repeat units follow at residues 56 to 86 (LKGEAIIQIHYSQDGNYLLSTATDGLAKLWT), 98 to 128 (KPVAMIFNGAFSRDGKAIITAGYNGVARIWD), 139 to 169 (GHTSAVTDVVFLSDDMGVVTSSDDGTIEGWS), 220 to 250 (TDQGRLNDVDFSQDGKLLVTAGFDGTARVFN), and 262 to 291 (LDDGWVTGVAINQDNLIATVSDDGILRVWN).

This is an uncharacterized protein from Synechocystis sp. (strain ATCC 27184 / PCC 6803 / Kazusa).